We begin with the raw amino-acid sequence, 139 residues long: Flagellar assembly factor FliW 2 (139 aa).

This sequence belongs to the FliW family. In terms of assembly, interacts with translational regulator CsrA and flagellin(s).

It localises to the cytoplasm. In terms of biological role, acts as an anti-CsrA protein, binds CsrA and prevents it from repressing translation of its target genes, one of which is flagellin. Binds to flagellin and participates in the assembly of the flagellum. The sequence is that of Flagellar assembly factor FliW 2 from Helicobacter hepaticus (strain ATCC 51449 / 3B1).